The following is a 198-amino-acid chain: MSALAVILVIGLSYLVGSVPTGYLIARHVKGIDIRGHGSGNIGATNVWRTLGPGWGLASLVGDTAKGIVAVLLGRAVGVPGLELLTGAAALTGHGWSVFLRFQGGKIIATSLGVLIMLPPVALATAAAVWIAVLALTRYVSLASIIAASSVPLAFALGGVGWRHVLFGLFLALVAVYKHRANIDRLLKGKESRFSFRK.

The next 3 helical transmembrane spans lie at 5–25 (AVIL…GYLI), 114–134 (VLIM…IAVL), and 154–176 (AFAL…LVAV).

The protein belongs to the PlsY family. In terms of assembly, probably interacts with PlsX.

The protein resides in the cell membrane. The catalysed reaction is an acyl phosphate + sn-glycerol 3-phosphate = a 1-acyl-sn-glycero-3-phosphate + phosphate. It functions in the pathway lipid metabolism; phospholipid metabolism. Functionally, catalyzes the transfer of an acyl group from acyl-phosphate (acyl-PO(4)) to glycerol-3-phosphate (G3P) to form lysophosphatidic acid (LPA). This enzyme utilizes acyl-phosphate as fatty acyl donor, but not acyl-CoA or acyl-ACP. The sequence is that of Glycerol-3-phosphate acyltransferase from Desulforudis audaxviator (strain MP104C).